Reading from the N-terminus, the 547-residue chain is Chaperonin GroEL 1 (547 aa).

ATP-binding positions include 30–33 (TLGP), Lys-51, 87–91 (DGTTT), Gly-415, and Asp-495.

The protein belongs to the chaperonin (HSP60) family. Forms a cylinder of 14 subunits composed of two heptameric rings stacked back-to-back. Interacts with the co-chaperonin GroES.

Its subcellular location is the cytoplasm. The catalysed reaction is ATP + H2O + a folded polypeptide = ADP + phosphate + an unfolded polypeptide.. Its function is as follows. Together with its co-chaperonin GroES, plays an essential role in assisting protein folding. The GroEL-GroES system forms a nano-cage that allows encapsulation of the non-native substrate proteins and provides a physical environment optimized to promote and accelerate protein folding. The polypeptide is Chaperonin GroEL 1 (Rhizobium johnstonii (strain DSM 114642 / LMG 32736 / 3841) (Rhizobium leguminosarum bv. viciae)).